The following is a 322-amino-acid chain: Ribose-phosphate pyrophosphokinase 1 (322 aa).

ATP is bound by residues 39–41 (DGE) and 98–99 (RQ). His132 and Asp173 together coordinate Mg(2+). Lys196 is a catalytic residue. D-ribose 5-phosphate-binding positions include Arg198, Asp224, and 228-232 (DTAGT).

This sequence belongs to the ribose-phosphate pyrophosphokinase family. Class I subfamily. In terms of assembly, homohexamer. Requires Mg(2+) as cofactor.

It is found in the cytoplasm. The catalysed reaction is D-ribose 5-phosphate + ATP = 5-phospho-alpha-D-ribose 1-diphosphate + AMP + H(+). It participates in metabolic intermediate biosynthesis; 5-phospho-alpha-D-ribose 1-diphosphate biosynthesis; 5-phospho-alpha-D-ribose 1-diphosphate from D-ribose 5-phosphate (route I): step 1/1. Involved in the biosynthesis of the central metabolite phospho-alpha-D-ribosyl-1-pyrophosphate (PRPP) via the transfer of pyrophosphoryl group from ATP to 1-hydroxyl of ribose-5-phosphate (Rib-5-P). The sequence is that of Ribose-phosphate pyrophosphokinase 1 from Streptococcus agalactiae serotype III (strain NEM316).